The primary structure comprises 323 residues: L-lactate dehydrogenase (323 aa).

Positions 12, 33, and 65 each coordinate NAD(+). Substrate contacts are provided by residues Arg-94 and 126 to 129; that span reads NPCD. Thr-149 serves as a coordination point for NAD(+). 154–157 contributes to the substrate binding site; that stretch reads ETMR. The active-site Proton acceptor is His-181. Position 234 (Thr-234) interacts with substrate.

This sequence belongs to the LDH/MDH superfamily. LDH family. In terms of assembly, homotetramer.

It localises to the cytoplasm. It carries out the reaction (S)-lactate + NAD(+) = pyruvate + NADH + H(+). Its pathway is fermentation; pyruvate fermentation to lactate; (S)-lactate from pyruvate: step 1/1. Functionally, catalyzes the conversion of lactate to pyruvate. In Mycoplasmoides gallisepticum (strain R(low / passage 15 / clone 2)) (Mycoplasma gallisepticum), this protein is L-lactate dehydrogenase.